The following is a 611-amino-acid chain: DNA mismatch repair protein MutL (611 aa).

The protein belongs to the DNA mismatch repair MutL/HexB family.

In terms of biological role, this protein is involved in the repair of mismatches in DNA. It is required for dam-dependent methyl-directed DNA mismatch repair. May act as a 'molecular matchmaker', a protein that promotes the formation of a stable complex between two or more DNA-binding proteins in an ATP-dependent manner without itself being part of a final effector complex. The chain is DNA mismatch repair protein MutL from Borreliella afzelii (strain PKo) (Borrelia afzelii).